Consider the following 224-residue polypeptide: 7-cyano-7-deazaguanine synthase (224 aa).

Position 8–18 (Leu-8–Ile-18) interacts with ATP. Positions 186, 196, 199, and 202 each coordinate Zn(2+).

The protein belongs to the QueC family. The cofactor is Zn(2+).

The enzyme catalyses 7-carboxy-7-deazaguanine + NH4(+) + ATP = 7-cyano-7-deazaguanine + ADP + phosphate + H2O + H(+). Its pathway is purine metabolism; 7-cyano-7-deazaguanine biosynthesis. Catalyzes the ATP-dependent conversion of 7-carboxy-7-deazaguanine (CDG) to 7-cyano-7-deazaguanine (preQ(0)). The chain is 7-cyano-7-deazaguanine synthase from Xanthomonas oryzae pv. oryzae (strain MAFF 311018).